Consider the following 311-residue polypeptide: Nod factor export ATP-binding protein I (311 aa).

In terms of domain architecture, ABC transporter spans 13–243 (IDLAGVSKSY…QIGCPVIEIY (231 aa)). 45–52 (GPNGAGKS) provides a ligand contact to ATP.

This sequence belongs to the ABC transporter superfamily. Lipooligosaccharide exporter (TC 3.A.1.102) family. In terms of assembly, the complex is composed of two ATP-binding proteins (NodI) and two transmembrane proteins (NodJ).

The protein localises to the cell inner membrane. Its function is as follows. Part of the ABC transporter complex NodIJ involved in the export of the nodulation factors (Nod factors), the bacterial signal molecules that induce symbiosis and subsequent nodulation induction. Nod factors are LCO (lipo-chitin oligosaccharide), a modified beta-1,4-linked N-acetylglucosamine oligosaccharide. This subunit is responsible for energy coupling to the transport system. This chain is Nod factor export ATP-binding protein I, found in Rhizobium leguminosarum bv. viciae.